A 249-amino-acid polypeptide reads, in one-letter code: DNA repair protein RecO (249 aa).

This sequence belongs to the RecO family.

Its function is as follows. Involved in DNA repair and RecF pathway recombination. The sequence is that of DNA repair protein RecO from Lactobacillus delbrueckii subsp. bulgaricus (strain ATCC 11842 / DSM 20081 / BCRC 10696 / JCM 1002 / NBRC 13953 / NCIMB 11778 / NCTC 12712 / WDCM 00102 / Lb 14).